Reading from the N-terminus, the 87-residue chain is U3-theraphotoxin-Hhn1a 2 (87 aa).

An N-terminal signal peptide occupies residues 1–24; that stretch reads MVNMKASMFLTFAGLVLLFVVCYA. Positions 25-52 are excised as a propeptide; the sequence is SESEEKEFPKEMLSSIFAVDDDFKQEER. 3 cysteine pairs are disulfide-bonded: cysteine 54-cysteine 67, cysteine 61-cysteine 72, and cysteine 66-cysteine 79.

This sequence belongs to the neurotoxin 10 (Hwtx-1) family. 51 (Hntx-8) subfamily. Hntx-8 sub-subfamily. As to expression, expressed by the venom gland.

The protein resides in the secreted. In terms of biological role, ion channel inhibitor. The polypeptide is U3-theraphotoxin-Hhn1a 2 (Cyriopagopus hainanus (Chinese bird spider)).